The following is a 33-amino-acid chain: Photosystem II reaction center protein Psb30 (33 aa).

A helical transmembrane segment spans residues 8–28; it reads QLGSLLLITVAGPLIVFFLFI.

This sequence belongs to the Psb30/Ycf12 family. PSII is composed of 1 copy each of membrane proteins PsbA, PsbB, PsbC, PsbD, PsbE, PsbF, PsbH, PsbI, PsbJ, PsbK, PsbL, PsbM, PsbT, PsbY, PsbZ, Psb30/Ycf12, peripheral proteins of the oxygen-evolving complex and a large number of cofactors. It forms dimeric complexes.

It is found in the plastid. The protein resides in the chloroplast thylakoid membrane. Functionally, a core subunit of photosystem II (PSII), probably helps stabilize the reaction center. The protein is Photosystem II reaction center protein Psb30 of Euglena anabaena (Euglenaria anabaena).